A 549-amino-acid chain; its full sequence is Glucose-6-phosphate isomerase (549 aa).

Glu-353 functions as the Proton donor in the catalytic mechanism. Active-site residues include His-384 and Lys-513.

This sequence belongs to the GPI family.

The protein resides in the cytoplasm. It carries out the reaction alpha-D-glucose 6-phosphate = beta-D-fructose 6-phosphate. Its pathway is carbohydrate biosynthesis; gluconeogenesis. The protein operates within carbohydrate degradation; glycolysis; D-glyceraldehyde 3-phosphate and glycerone phosphate from D-glucose: step 2/4. In terms of biological role, catalyzes the reversible isomerization of glucose-6-phosphate to fructose-6-phosphate. This Brucella suis (strain ATCC 23445 / NCTC 10510) protein is Glucose-6-phosphate isomerase.